A 439-amino-acid polypeptide reads, in one-letter code: Paraneoplastic antigen-like protein 8A (439 aa).

A disordered region spans residues 213 to 439 (ETPNNWNATE…RRATNESRKV (227 aa)). Basic residues predominate over residues 231–249 (LVRRAGAKSRSRRKKQKKN). A compositionally biased stretch (polar residues) spans 403–419 (KAPQGQQPAEATASTSR). A compositionally biased stretch (basic and acidic residues) spans 423 to 439 (AKPEGSPRRATNESRKV).

The protein belongs to the PNMA family.

The polypeptide is Paraneoplastic antigen-like protein 8A (PNMA8A) (Pongo abelii (Sumatran orangutan)).